The sequence spans 221 residues: Endo-1,4-beta-xylanase 11A (221 aa).

Residues M1–A17 form the signal peptide. The GH11 domain maps to R28–R218. Residue N89 is glycosylated (N-linked (GlcNAc...) asparagine). E113 functions as the Nucleophile in the catalytic mechanism. E205 serves as the catalytic Proton donor.

Belongs to the glycosyl hydrolase 11 (cellulase G) family.

It is found in the secreted. It carries out the reaction Endohydrolysis of (1-&gt;4)-beta-D-xylosidic linkages in xylans.. It functions in the pathway glycan degradation; xylan degradation. With respect to regulation, retains an activity of 52.5% in the presence of 5 mM SDS. Its function is as follows. Endo-1,4-beta-xylanase involved in the hydrolysis of xylan, a major structural heterogeneous polysaccharide found in plant biomass representing the second most abundant polysaccharide in the biosphere, after cellulose. Is an alkali-tolerant enzyme, exhibiting 50.6% of activity at pH 9.0, and 26.9% even at pH 10.0. The protein is Endo-1,4-beta-xylanase 11A of Humicola insolens (Soft-rot fungus).